Here is a 248-residue protein sequence, read N- to C-terminus: 4-hydroxy-tetrahydrodipicolinate reductase (248 aa).

NAD(+)-binding positions include aspartate 32, 74 to 76, and 99 to 102; these read GTT and SANF. The active-site Proton donor/acceptor is the histidine 134. Histidine 135 is a (S)-2,3,4,5-tetrahydrodipicolinate binding site. The Proton donor role is filled by lysine 138. 144 to 145 provides a ligand contact to (S)-2,3,4,5-tetrahydrodipicolinate; that stretch reads GT.

Belongs to the DapB family.

It is found in the cytoplasm. It carries out the reaction (S)-2,3,4,5-tetrahydrodipicolinate + NAD(+) + H2O = (2S,4S)-4-hydroxy-2,3,4,5-tetrahydrodipicolinate + NADH + H(+). The catalysed reaction is (S)-2,3,4,5-tetrahydrodipicolinate + NADP(+) + H2O = (2S,4S)-4-hydroxy-2,3,4,5-tetrahydrodipicolinate + NADPH + H(+). Its pathway is amino-acid biosynthesis; L-lysine biosynthesis via DAP pathway; (S)-tetrahydrodipicolinate from L-aspartate: step 4/4. Functionally, catalyzes the conversion of 4-hydroxy-tetrahydrodipicolinate (HTPA) to tetrahydrodipicolinate. The chain is 4-hydroxy-tetrahydrodipicolinate reductase from Chlorobium luteolum (strain DSM 273 / BCRC 81028 / 2530) (Pelodictyon luteolum).